A 275-amino-acid polypeptide reads, in one-letter code: Glutamate racemase (275 aa).

Substrate contacts are provided by residues 12 to 13 (DS) and 44 to 45 (YG). The Proton donor/acceptor role is filled by Cys-75. 76 to 77 (NT) lines the substrate pocket. The Proton donor/acceptor role is filled by Cys-185. 186 to 187 (TH) is a substrate binding site.

It belongs to the aspartate/glutamate racemases family.

The enzyme catalyses L-glutamate = D-glutamate. It functions in the pathway cell wall biogenesis; peptidoglycan biosynthesis. In terms of biological role, provides the (R)-glutamate required for cell wall biosynthesis. In Mycobacterium avium (strain 104), this protein is Glutamate racemase.